Consider the following 484-residue polypeptide: Phosphatidylinositol N-acetylglucosaminyltransferase subunit A (484 aa).

Residues 1 to 421 (MACRGGAGNG…RLDRLISHCG (421 aa)) are Cytoplasmic-facing. Phosphoserine is present on residues Ser-21 and Ser-24. The helical transmembrane segment at 422 to 442 (PVTGYIFALLAVFNFLFLIFL) threads the bilayer. The Lumenal portion of the chain corresponds to 443–484 (RWMTPDSIIDVAIDATGPRGAWTNNYSHSKRGGENNEISETR). N-linked (GlcNAc...) asparagine glycosylation is present at Asn-467.

This sequence belongs to the glycosyltransferase group 1 family. Glycosyltransferase 4 subfamily. As to quaternary structure, component of the glycosylphosphatidylinositol-N-acetylglucosaminyltransferase (GPI-GnT) complex composed at least by PIGA, PIGC, PIGH, PIGP, PIGQ, PIGY and DPM2. Interacts with PIGC, PIGH, PIGP, PIGQ and DPM2. Interacts directly with PIGY; this interaction regulates glycosylphosphatidylinositol-N-acetylglucosaminyltransferase activity. Interacts with PIGQ.

The protein localises to the endoplasmic reticulum membrane. It carries out the reaction a 1,2-diacyl-sn-glycero-3-phospho-(1D-myo-inositol) + UDP-N-acetyl-alpha-D-glucosamine = a 6-(N-acetyl-alpha-D-glucosaminyl)-1-(1,2-diacyl-sn-glycero-3-phospho)-1D-myo-inositol + UDP + H(+). Its pathway is glycolipid biosynthesis; glycosylphosphatidylinositol-anchor biosynthesis. Functionally, catalytic subunit of the glycosylphosphatidylinositol-N-acetylglucosaminyltransferase (GPI-GnT) complex that catalyzes the transfer of N-acetylglucosamine from UDP-N-acetylglucosamine to phosphatidylinositol and participates in the first step of GPI biosynthesis. In Homo sapiens (Human), this protein is Phosphatidylinositol N-acetylglucosaminyltransferase subunit A.